Here is a 447-residue protein sequence, read N- to C-terminus: UPF0210 protein lp_2507 (447 aa).

This sequence belongs to the UPF0210 family. Homodimer.

The chain is UPF0210 protein lp_2507 from Lactiplantibacillus plantarum (strain ATCC BAA-793 / NCIMB 8826 / WCFS1) (Lactobacillus plantarum).